An 806-amino-acid polypeptide reads, in one-letter code: Glycerol-3-phosphate acyltransferase (806 aa).

Residues 305-310 (CHRSHM) carry the HXXXXD motif motif.

This sequence belongs to the GPAT/DAPAT family.

The protein localises to the cell inner membrane. It catalyses the reaction sn-glycerol 3-phosphate + an acyl-CoA = a 1-acyl-sn-glycero-3-phosphate + CoA. The protein operates within phospholipid metabolism; CDP-diacylglycerol biosynthesis; CDP-diacylglycerol from sn-glycerol 3-phosphate: step 1/3. This Salmonella arizonae (strain ATCC BAA-731 / CDC346-86 / RSK2980) protein is Glycerol-3-phosphate acyltransferase.